Reading from the N-terminus, the 361-residue chain is 3-dehydroquinate synthase (361 aa).

NAD(+) contacts are provided by residues Asn41, 70–75 (DGEQYK), 104–108 (GVIGD), 128–129 (TT), Lys141, Lys150, 150–151 (KN), and 168–171 (CLTT). Positions 183, 246, and 263 each coordinate Zn(2+).

This sequence belongs to the sugar phosphate cyclases superfamily. Dehydroquinate synthase family. It depends on NAD(+) as a cofactor. Co(2+) serves as cofactor. The cofactor is Zn(2+).

The protein localises to the cytoplasm. The catalysed reaction is 7-phospho-2-dehydro-3-deoxy-D-arabino-heptonate = 3-dehydroquinate + phosphate. It participates in metabolic intermediate biosynthesis; chorismate biosynthesis; chorismate from D-erythrose 4-phosphate and phosphoenolpyruvate: step 2/7. Functionally, catalyzes the conversion of 3-deoxy-D-arabino-heptulosonate 7-phosphate (DAHP) to dehydroquinate (DHQ). The protein is 3-dehydroquinate synthase of Vibrio cholerae serotype O1 (strain ATCC 39315 / El Tor Inaba N16961).